Here is a 196-residue protein sequence, read N- to C-terminus: MSRGGGGDRRAAPDINGLTSLKIDNLSYQTTPNDLRRTFERYGDIGDVHIPRDKYSRQSKGFGFVRFYERRDAEHALDRTDGKLVDGRELRVTLAKYDRPSDERGGRGGGGGRRRSRSPRRRSRSPRYSRSRSPRRSRSRTRSPPSRDRRDSPDRRDNSRSRSRSPPPREDGSPKERRSRSRSASRSPSRSRSNSR.

The region spanning Thr19 to Tyr97 is the RRM domain. Over residues Arg91–Gly106 the composition is skewed to basic and acidic residues. A disordered region spans residues Arg91 to Arg196. Over residues Gly112 to Thr141 the composition is skewed to basic residues. Basic and acidic residues-rich tracts occupy residues Pro145 to Arg160 and Pro167 to Glu176. Residues Ala184–Arg196 show a composition bias toward low complexity.

This sequence belongs to the splicing factor SR family. Post-translationally, extensively phosphorylated on serine residues in the RS domain.

Its subcellular location is the nucleus. Its function is as follows. May play a functionally redundant role in embryogenesis. In Caenorhabditis elegans, this protein is Probable splicing factor, arginine/serine-rich 4 (rsp-4).